Here is a 1648-residue protein sequence, read N- to C-terminus: Kinesin-like protein KIF14 (1648 aa).

Positions 1–27 (MSLHSTHNRNNSGDILDIPSSQNSSSL) are disordered. Residues 1–356 (MSLHSTHNRN…AGKDPLKVEN (356 aa)) form a required for PRC1-binding region. 2 positions are modified to phosphoserine: S12 and S272. T277 carries the post-translational modification Phosphothreonine. The residue at position 346 (S346) is a Phosphoserine. The required for microtubule-binding with high affinity stretch occupies residues 356–737 (NSQVTVAVRV…AAQRNSRNID (382 aa)). The Kinesin motor domain occupies 358–701 (QVTVAVRVRP…LRYANQARLI (344 aa)). 447–454 (GQTGSGKS) contacts ATP. Residues 705–791 (AKVNEDMNAK…QETKELQKAG (87 aa)) are a coiled coil. One can recognise an FHA domain in the interval 825-891 (TTVGKYKPNS…LRHGDRVILG (67 aa)). The tract at residues 901 to 1648 (PVEVQKGKRP…ECTPSRIQWV (748 aa)) is required for CIT-binding. Residue T915 is modified to Phosphothreonine. The stretch at 922–1079 (KDFEFAKNEL…QNRNNRDKTF (158 aa)) forms a coiled coil. A phosphoserine mark is found at S937 and S1292. 2 coiled-coil regions span residues 1332-1348 (TNIA…VKKL) and 1468-1500 (ENIF…VNRA). Residues 1600 to 1648 (NTKEEHQQSKSSGIDGSKNKGVPKRVYELHGSSPAVSSEECTPSRIQWV) form a disordered region. Positions 1633 to 1648 (PAVSSEECTPSRIQWV) are enriched in polar residues.

Belongs to the TRAFAC class myosin-kinesin ATPase superfamily. Kinesin family. As to quaternary structure, directly interacts with PRC1 within a complex also containing KIF4A, KIF20A and KIF23; targets to the central spindle. Directly interacts with CIT depending on the activation state of the kinase (stronger interaction with the kinase-dead form); targets to the midbody. Interacts with ARRB2; the interaction is detected in the nucleus upon OR1D2 stimulation. Interacts with AKT1; the interaction is detected in the plasma membrane upon INS stimulation and promotes AKT1 phosphorylation. Interacts with SVIL; at midbody during cytokinesis. Interacts with RADIL (via PDZ domain); recruits RADIL to the microtubule network restricting RADIL from interaction with activated RAP1A.

It is found in the nucleus. The protein localises to the cytoplasm. Its subcellular location is the cytoskeleton. It localises to the spindle. The protein resides in the midbody. Its function is as follows. Microtubule motor protein that binds to microtubules with high affinity through each tubulin heterodimer and has an ATPase activity. Plays a role in many processes like cell division, cytokinesis and also in cell proliferation and apoptosis. During cytokinesis, targets to central spindle and midbody through its interaction with PRC1 and CIT respectively. Regulates cell growth through regulation of cell cycle progression and cytokinesis. During cell cycle progression acts through SCF-dependent proteasomal ubiquitin-dependent protein catabolic process which controls CDKN1B degradation, resulting in positive regulation of cyclins, including CCNE1, CCND1 and CCNB1. During late neurogenesis, regulates the cerebellar, cerebral cortex and olfactory bulb development through regulation of apoptosis, cell proliferation and cell division. Also is required for chromosome congression and alignment during mitotic cell cycle process. Regulates cell spreading, focal adhesion dynamics, and cell migration through its interaction with RADIL resulting in regulation of RAP1A-mediated inside-out integrin activation by tethering RADIL on microtubules. The sequence is that of Kinesin-like protein KIF14 from Homo sapiens (Human).